We begin with the raw amino-acid sequence, 493 residues long: Probable cytosol aminopeptidase (493 aa).

Positions 257 and 262 each coordinate Mn(2+). Lys269 is a catalytic residue. 3 residues coordinate Mn(2+): Asp281, Asp341, and Glu343. Arg345 is an active-site residue.

This sequence belongs to the peptidase M17 family. Mn(2+) serves as cofactor.

The protein resides in the cytoplasm. The catalysed reaction is Release of an N-terminal amino acid, Xaa-|-Yaa-, in which Xaa is preferably Leu, but may be other amino acids including Pro although not Arg or Lys, and Yaa may be Pro. Amino acid amides and methyl esters are also readily hydrolyzed, but rates on arylamides are exceedingly low.. It carries out the reaction Release of an N-terminal amino acid, preferentially leucine, but not glutamic or aspartic acids.. Presumably involved in the processing and regular turnover of intracellular proteins. Catalyzes the removal of unsubstituted N-terminal amino acids from various peptides. This is Probable cytosol aminopeptidase from Prochlorococcus marinus (strain MIT 9211).